A 93-amino-acid chain; its full sequence is MHKEEIILLHLTLYNIKKLFENAGIANGHFKAYDELGVQPVHIHKSKTEHKKAISLLCKGISEIFRERSPEDLIESENLKFVIESIAPELCEP.

The protein belongs to the UPF0058 family.

The chain is UPF0058 protein AF_0738 from Archaeoglobus fulgidus (strain ATCC 49558 / DSM 4304 / JCM 9628 / NBRC 100126 / VC-16).